The sequence spans 293 residues: Signal recognition particle receptor FtsY (293 aa).

GTP contacts are provided by residues 93-100, 175-179, and 239-242; these read GVNGAGKT, DTAGR, and TKLD.

The protein belongs to the GTP-binding SRP family. FtsY subfamily. In terms of assembly, part of the signal recognition particle protein translocation system, which is composed of SRP and FtsY. SRP is a ribonucleoprotein composed of Ffh and a 4.5S RNA molecule.

It localises to the cell inner membrane. It is found in the cytoplasm. The enzyme catalyses GTP + H2O = GDP + phosphate + H(+). Its function is as follows. Involved in targeting and insertion of nascent membrane proteins into the cytoplasmic membrane. Acts as a receptor for the complex formed by the signal recognition particle (SRP) and the ribosome-nascent chain (RNC). Interaction with SRP-RNC leads to the transfer of the RNC complex to the Sec translocase for insertion into the membrane, the hydrolysis of GTP by both Ffh and FtsY, and the dissociation of the SRP-FtsY complex into the individual components. The polypeptide is Signal recognition particle receptor FtsY (Helicobacter pylori (strain ATCC 700392 / 26695) (Campylobacter pylori)).